The primary structure comprises 382 residues: Putative acetyl-CoA C-acetyltransferase VraB (382 aa).

Cys-86 (acyl-thioester intermediate) is an active-site residue. Residue His-338 is the Proton acceptor of the active site.

It belongs to the thiolase-like superfamily. Thiolase family.

In Staphylococcus epidermidis (strain ATCC 12228 / FDA PCI 1200), this protein is Putative acetyl-CoA C-acetyltransferase VraB (vraB).